A 443-amino-acid chain; its full sequence is Ribosomal protein uS12 methylthiotransferase RimO (443 aa).

Residues 5 to 115 (PNIGFISLGC…VMKHVHKYVP (111 aa)) enclose the MTTase N-terminal domain. [4Fe-4S] cluster is bound by residues cysteine 14, cysteine 50, cysteine 79, cysteine 147, cysteine 151, and cysteine 154. In terms of domain architecture, Radical SAM core spans 133–374 (LTPKHYAYLK…MQLQQKISAE (242 aa)). The TRAM domain occupies 377–443 (RQKIGRTLSV…ADEYDLWGEI (67 aa)).

The protein belongs to the methylthiotransferase family. RimO subfamily. [4Fe-4S] cluster is required as a cofactor.

It is found in the cytoplasm. It carries out the reaction L-aspartate(89)-[ribosomal protein uS12]-hydrogen + (sulfur carrier)-SH + AH2 + 2 S-adenosyl-L-methionine = 3-methylsulfanyl-L-aspartate(89)-[ribosomal protein uS12]-hydrogen + (sulfur carrier)-H + 5'-deoxyadenosine + L-methionine + A + S-adenosyl-L-homocysteine + 2 H(+). In terms of biological role, catalyzes the methylthiolation of an aspartic acid residue of ribosomal protein uS12. The chain is Ribosomal protein uS12 methylthiotransferase RimO from Histophilus somni (strain 2336) (Haemophilus somnus).